Here is a 78-residue protein sequence, read N- to C-terminus: Acyl carrier protein (78 aa).

Residues 2 to 77 (STIEERVKKI…AAIDYVKAHQ (76 aa)) form the Carrier domain. An O-(pantetheine 4'-phosphoryl)serine modification is found at Ser-37.

It belongs to the acyl carrier protein (ACP) family. 4'-phosphopantetheine is transferred from CoA to a specific serine of apo-ACP by AcpS. This modification is essential for activity because fatty acids are bound in thioester linkage to the sulfhydryl of the prosthetic group.

It localises to the cytoplasm. The protein operates within lipid metabolism; fatty acid biosynthesis. In terms of biological role, carrier of the growing fatty acid chain in fatty acid biosynthesis. The chain is Acyl carrier protein from Pseudomonas putida (strain ATCC 47054 / DSM 6125 / CFBP 8728 / NCIMB 11950 / KT2440).